The following is a 183-amino-acid chain: Capsid protein (183 aa).

The tract at residues 136–183 (NAPILSTLPETTVVRRRGRSPRRRTPSPRRRRSQSPRRRRSQSRESQC) is disordered. Residues 149-176 (VRRRGRSPRRRTPSPRRRRSQSPRRRRS) show a composition bias toward basic residues. Ser155, Ser162, and Ser170 each carry phosphoserine; by host. The stretch at 155-161 (SPRRRTP) is one 1; half-length repeat. The interval 155–177 (SPRRRTPSPRRRRSQSPRRRRSQ) is 3 X 8 AA repeats of S-P-R-R-R-[PR]-S-Q. The Bipartite nuclear localization signal signature appears at 158 to 175 (RRTPSPRRRRSQSPRRRR). Tandem repeats lie at residues 162–169 (SPRRRRSQ) and 170–177 (SPRRRRSQ). The interval 177–183 (QSRESQC) is RNA binding.

The protein belongs to the orthohepadnavirus core antigen family. As to quaternary structure, homodimerizes, then multimerizes. Interacts with cytosol exposed regions of viral L glycoprotein present in the reticulum-to-Golgi compartment. Interacts with human FLNB. Phosphorylated form interacts with host importin alpha; this interaction depends on the exposure of the NLS, which itself depends upon genome maturation and/or phosphorylation of the capsid protein. Interacts with host NUP153. Post-translationally, phosphorylated by host SRPK1, SRPK2, and maybe protein kinase C or GAPDH. Phosphorylation is critical for pregenomic RNA packaging. Protein kinase C phosphorylation is stimulated by HBx protein and may play a role in transport of the viral genome to the nucleus at the late step during the viral replication cycle.

The protein resides in the virion. It localises to the host cytoplasm. Its function is as follows. Self assembles to form an icosahedral capsid. Most capsids appear to be large particles with an icosahedral symmetry of T=4 and consist of 240 copies of capsid protein, though a fraction forms smaller T=3 particles consisting of 180 capsid proteins. Entering capsids are transported along microtubules to the nucleus. Phosphorylation of the capsid is thought to induce exposure of nuclear localization signal in the C-terminal portion of the capsid protein that allows binding to the nuclear pore complex via the importin (karyopherin-) alpha and beta. Capsids are imported in intact form through the nuclear pore into the nuclear basket, where it probably binds NUP153. Only capsids that contain the mature viral genome can release the viral DNA and capsid protein into the nucleoplasm. Immature capsids get stuck in the basket. Capsids encapsulate the pre-genomic RNA and the P protein. Pre-genomic RNA is reverse-transcribed into DNA while the capsid is still in the cytoplasm. The capsid can then either be directed to the nucleus, providing more genomes for transcription, or bud through the endoplasmic reticulum to provide new virions. The sequence is that of Capsid protein from Homo sapiens (Human).